The following is a 377-amino-acid chain: Pyruvate dehydrogenase E1 component subunit alpha, mitochondrial (377 aa).

A mitochondrion-targeting transit peptide spans 1-26 (MLSNFLKVNSKALGHIRTFASKSGEI). Pyruvate is bound by residues H83, Y109, R110, G156, V158, D187, G188, A189, N216, and Y218. Thiamine diphosphate contacts are provided by Y109, R110, G156, V158, D187, G188, A189, and N216. D187 provides a ligand contact to Mg(2+). Residues N216 and Y218 each coordinate Mg(2+). H283 provides a ligand contact to thiamine diphosphate.

Tetramer of 2 alpha and 2 beta subunits. Thiamine diphosphate is required as a cofactor. Requires Mg(2+) as cofactor.

Its subcellular location is the mitochondrion matrix. It catalyses the reaction N(6)-[(R)-lipoyl]-L-lysyl-[protein] + pyruvate + H(+) = N(6)-[(R)-S(8)-acetyldihydrolipoyl]-L-lysyl-[protein] + CO2. With respect to regulation, E1 activity is regulated by phosphorylation (inactivation) and dephosphorylation (activation) of the alpha subunit. In terms of biological role, the pyruvate dehydrogenase complex catalyzes the overall conversion of pyruvate to acetyl-CoA and CO(2). It contains multiple copies of three enzymatic components: pyruvate dehydrogenase (E1), dihydrolipoamide acetyltransferase (E2) and lipoamide dehydrogenase (E3). In Dictyostelium discoideum (Social amoeba), this protein is Pyruvate dehydrogenase E1 component subunit alpha, mitochondrial (pdhA).